The following is a 198-amino-acid chain: Small ribosomal subunit protein uS4 (198 aa).

The S4 RNA-binding domain occupies 91–154; sequence SRLDNVVYRL…KNLNIVQEAV (64 aa).

It belongs to the universal ribosomal protein uS4 family. In terms of assembly, part of the 30S ribosomal subunit. Contacts protein S5. The interaction surface between S4 and S5 is involved in control of translational fidelity.

Functionally, one of the primary rRNA binding proteins, it binds directly to 16S rRNA where it nucleates assembly of the body of the 30S subunit. Its function is as follows. With S5 and S12 plays an important role in translational accuracy. This Onion yellows phytoplasma (strain OY-M) protein is Small ribosomal subunit protein uS4.